We begin with the raw amino-acid sequence, 163 residues long: Small ribosomal subunit protein uS5 (163 aa).

In terms of domain architecture, S5 DRBM spans 11–74; that stretch reads LTDRVVHINR…EQAKKNLIRV (64 aa).

Belongs to the universal ribosomal protein uS5 family. As to quaternary structure, part of the 30S ribosomal subunit. Contacts proteins S4 and S8.

Functionally, with S4 and S12 plays an important role in translational accuracy. Its function is as follows. Located at the back of the 30S subunit body where it stabilizes the conformation of the head with respect to the body. The sequence is that of Small ribosomal subunit protein uS5 from Syntrophotalea carbinolica (strain DSM 2380 / NBRC 103641 / GraBd1) (Pelobacter carbinolicus).